Reading from the N-terminus, the 339-residue chain is NADH-quinone oxidoreductase subunit H (339 aa).

Transmembrane regions (helical) follow at residues 9-29 (IFPLIIIALKVVAITIPLILC), 50-70 (PNVVGPFGLLQPIADAVKLLF), 82-102 (ILFVLAPMITFILSLIGWAVI), 115-135 (VGVLYILAISSLSVYGIIIAG), 161-181 (MGLVIITVLLTTGTLNLSQIV), 187-207 (MPWWIDLMLMPMGVVFFISVL), 235-255 (MGFALFFLGEYANMILVSAMT), 275-295 (IPGFFWFVFKVGFLLFCFLWI), and 311-331 (GWKVFLPLTLFWVVLVSSVLI).

The protein belongs to the complex I subunit 1 family. NDH-1 is composed of 14 different subunits. Subunits NuoA, H, J, K, L, M, N constitute the membrane sector of the complex.

Its subcellular location is the cell inner membrane. It catalyses the reaction a quinone + NADH + 5 H(+)(in) = a quinol + NAD(+) + 4 H(+)(out). NDH-1 shuttles electrons from NADH, via FMN and iron-sulfur (Fe-S) centers, to quinones in the respiratory chain. The immediate electron acceptor for the enzyme in this species is believed to be ubiquinone. Couples the redox reaction to proton translocation (for every two electrons transferred, four hydrogen ions are translocated across the cytoplasmic membrane), and thus conserves the redox energy in a proton gradient. This subunit may bind ubiquinone. The polypeptide is NADH-quinone oxidoreductase subunit H (Rickettsia bellii (strain RML369-C)).